The primary structure comprises 203 residues: Ribosomal RNA small subunit methyltransferase G (203 aa).

S-adenosyl-L-methionine is bound by residues Gly73, Leu78, Val124–Glu125, and Arg138.

It belongs to the methyltransferase superfamily. RNA methyltransferase RsmG family.

It is found in the cytoplasm. It carries out the reaction guanosine(527) in 16S rRNA + S-adenosyl-L-methionine = N(7)-methylguanosine(527) in 16S rRNA + S-adenosyl-L-homocysteine. Its function is as follows. Specifically methylates the N7 position of guanine in position 527 of 16S rRNA. The protein is Ribosomal RNA small subunit methyltransferase G of Glaesserella parasuis serovar 5 (strain SH0165) (Haemophilus parasuis).